Reading from the N-terminus, the 853-residue chain is DNA mismatch repair protein MutS (853 aa).

Residue 614–621 (GPNMGGKS) coordinates ATP.

Belongs to the DNA mismatch repair MutS family.

This protein is involved in the repair of mismatches in DNA. It is possible that it carries out the mismatch recognition step. This protein has a weak ATPase activity. The protein is DNA mismatch repair protein MutS of Shigella dysenteriae serotype 1 (strain Sd197).